We begin with the raw amino-acid sequence, 147 residues long: Lysozyme C, intestinal isozyme (147 aa).

The signal sequence occupies residues Met1 to Gly18. The C-type lysozyme domain occupies Lys19–Leu147. Disulfide bonds link Cys24–Cys145, Cys48–Cys133, Cys83–Cys99, and Cys95–Cys113. Residues Glu53 and Asp71 contribute to the active site.

This sequence belongs to the glycosyl hydrolase 22 family.

It carries out the reaction Hydrolysis of (1-&gt;4)-beta-linkages between N-acetylmuramic acid and N-acetyl-D-glucosamine residues in a peptidoglycan and between N-acetyl-D-glucosamine residues in chitodextrins.. Functionally, lysozymes have primarily a bacteriolytic function; those in tissues and body fluids are associated with the monocyte-macrophage system and enhance the activity of immunoagents. This Bos taurus (Bovine) protein is Lysozyme C, intestinal isozyme.